Reading from the N-terminus, the 269-residue chain is Small ribosomal subunit protein uS3 (269 aa).

The KH type-2 domain occupies 38–106 (IREWLHKNLE…QIQLNILEVK (69 aa)). The segment at 215–269 (AQKAARQAAQGGRGGRGGNRRGRGDRPDRRGGRRRAEAAKQSAETPAPQTENAGA) is disordered. Residues 236-252 (GRGDRPDRRGGRRRAEA) are compositionally biased toward basic and acidic residues. Residues 256 to 269 (SAETPAPQTENAGA) are compositionally biased toward polar residues.

The protein belongs to the universal ribosomal protein uS3 family. Part of the 30S ribosomal subunit. Forms a tight complex with proteins S10 and S14.

Its function is as follows. Binds the lower part of the 30S subunit head. Binds mRNA in the 70S ribosome, positioning it for translation. In Cutibacterium acnes (strain DSM 16379 / KPA171202) (Propionibacterium acnes), this protein is Small ribosomal subunit protein uS3.